We begin with the raw amino-acid sequence, 127 residues long: Small ribosomal subunit protein uS13 (127 aa).

The tract at residues 92–127 (HRMGLPVRGQRTRTNARTRRGVRRTVAGKKKASAKK) is disordered. The segment covering 101-127 (QRTRTNARTRRGVRRTVAGKKKASAKK) has biased composition (basic residues).

The protein belongs to the universal ribosomal protein uS13 family. As to quaternary structure, part of the 30S ribosomal subunit. Forms a loose heterodimer with protein S19. Forms two bridges to the 50S subunit in the 70S ribosome.

In terms of biological role, located at the top of the head of the 30S subunit, it contacts several helices of the 16S rRNA. In the 70S ribosome it contacts the 23S rRNA (bridge B1a) and protein L5 of the 50S subunit (bridge B1b), connecting the 2 subunits; these bridges are implicated in subunit movement. Contacts the tRNAs in the A and P-sites. This is Small ribosomal subunit protein uS13 from Trichodesmium erythraeum (strain IMS101).